Consider the following 356-residue polypeptide: MGLCQSEEEKVGSQKSRAIDKEIKQNQSNDERTVKLLLLGAGECGKSTVLKQMRLLTSKTYTADELEAQAKLVFTNIVIEMDHIVKAMPSAHFNFTDPMREHDVHMLTLYIKDMQHKSFHADAAEHVAKLWKDPVIKRLYAERRERNIRDIGDNTEYFFENLDRIAKPDYSPNSMDTLLLRTKTTGIVEVQFEIKKVKFRVFDVGGQRSERKKWIHCFEDVNAIIFIAALSEYNEVLFEDETTNRMIESMRLFESICNSRWFHNTNIILFLNKKDLFEDKIKKENITKAFPEYRGAQNYEETVAFIKQKFEALSNNPKKTFYVHETCATDTNQVQKILDSVISMIIQSNLHKSGLY.

The segment at 1 to 25 is disordered; it reads MGLCQSEEEKVGSQKSRAIDKEIKQ. G2 carries N-myristoyl glycine lipidation. Residue C4 is the site of S-palmitoyl cysteine attachment. The segment covering 7 to 25 has biased composition (basic and acidic residues); that stretch reads EEEKVGSQKSRAIDKEIKQ. The 325-residue stretch at 14-338 folds into the G-alpha domain; the sequence is QKSRAIDKEI…TDTNQVQKIL (325 aa). Residues 17-30 form a G1 motif region; that stretch reads RAIDKEIKQNQSND. Residues Q25, Q27, S28, N29, D30, V135, E160, A166, V188, E254, S255, C257, and F310 each contribute to the GTP site. N29 lines the Mg(2+) pocket. A G2 motif region spans residues 158–166; the sequence is FFENLDRIA. A166 lines the Mg(2+) pocket. The interval 181-190 is G3 motif; the sequence is RTKTTGIVEV. A G4 motif region spans residues 250–257; it reads MRLFESIC. The interval 308-313 is G5 motif; it reads QKFEAL.

It belongs to the G-alpha family. G(q) subfamily. In terms of assembly, g proteins are composed of 3 units; alpha, beta and gamma. The alpha chain contains the guanine nucleotide binding site. The cofactor is Mg(2+).

Functionally, guanine nucleotide-binding proteins (G proteins) are involved as modulators or transducers in various transmembrane signaling systems. Involved in behavioral responses to P.aeruginosa by controlling the expression of daf-7, a member of the TGF-beta family, in ASJ sensory neurons. This is Guanine nucleotide-binding protein alpha-2 subunit (gpa-2) from Caenorhabditis briggsae.